The chain runs to 316 residues: ATP synthase gamma chain (316 aa).

Belongs to the ATPase gamma chain family. In terms of assembly, F-type ATPases have 2 components, CF(1) - the catalytic core - and CF(0) - the membrane proton channel. CF(1) has five subunits: alpha(3), beta(3), gamma(1), delta(1), epsilon(1). CF(0) has three main subunits: a, b and c.

It localises to the cellular thylakoid membrane. In terms of biological role, produces ATP from ADP in the presence of a proton gradient across the membrane. The gamma chain is believed to be important in regulating ATPase activity and the flow of protons through the CF(0) complex. This is ATP synthase gamma chain from Prochlorococcus marinus (strain MIT 9312).